The sequence spans 384 residues: MTPIQNAQQIFNRQHKNLPEITVYAPGRVNIIGEHTDYNDGFVMPCAINFGTAVSGTKRDDHIWNVYAADLDETDEFSLNVEIPKSEHKWANYVRGVVKFIQERYPDFQQGANLVISGNVPLSSGLSSSAALEVAVGKFCQQLGDLPLSHTDIALNGQKAENQFVGANCGNMDQLISALGQENHLLMIDCRSLETTPTPVPQDVAVIIVNSNVPHDLVTGEYNTRRQQCEEAAKFFDVKALRDVSVEQFQKREAELTALSPLAAKRARHVVTENQRVLDAVEALKNNDLTCLGKLMEASHDSMRDDFEITVPQIDYLVELVQLVIGKSGGARMTGGGFGGCIVALAPHDKVDAVRKIIADNYEKTTGLKETFYVCTASQGVRVI.

34–37 (EHTD) lines the substrate pocket. 123 to 129 (SSGLSSS) is an ATP binding site. 2 residues coordinate Mg(2+): Ser-129 and Glu-161. Asp-173 serves as the catalytic Proton acceptor. Tyr-222 is a substrate binding site.

Belongs to the GHMP kinase family. GalK subfamily.

It localises to the cytoplasm. The catalysed reaction is alpha-D-galactose + ATP = alpha-D-galactose 1-phosphate + ADP + H(+). The protein operates within carbohydrate metabolism; galactose metabolism. Catalyzes the transfer of the gamma-phosphate of ATP to D-galactose to form alpha-D-galactose-1-phosphate (Gal-1-P). The polypeptide is Galactokinase (Haemophilus influenzae (strain PittGG)).